The primary structure comprises 387 residues: Ferrochelatase (387 aa).

Residues His196 and Glu277 each contribute to the Fe cation site.

This sequence belongs to the ferrochelatase family.

It is found in the cytoplasm. It carries out the reaction heme b + 2 H(+) = protoporphyrin IX + Fe(2+). It participates in porphyrin-containing compound metabolism; protoheme biosynthesis; protoheme from protoporphyrin-IX: step 1/1. In terms of biological role, catalyzes the ferrous insertion into protoporphyrin IX. The chain is Ferrochelatase from Trichodesmium erythraeum (strain IMS101).